A 264-amino-acid polypeptide reads, in one-letter code: Undecaprenyl-diphosphatase (264 aa).

Transmembrane regions (helical) follow at residues arginine 38–phenylalanine 58, arginine 75–valine 95, valine 106–tyrosine 126, valine 136–glycine 156, phenylalanine 181–methionine 201, valine 217–isoleucine 237, and phenylalanine 242–serine 262.

Belongs to the UppP family.

The protein localises to the cell inner membrane. The catalysed reaction is di-trans,octa-cis-undecaprenyl diphosphate + H2O = di-trans,octa-cis-undecaprenyl phosphate + phosphate + H(+). In terms of biological role, catalyzes the dephosphorylation of undecaprenyl diphosphate (UPP). Confers resistance to bacitracin. This is Undecaprenyl-diphosphatase from Stenotrophomonas maltophilia (strain R551-3).